Here is a 378-residue protein sequence, read N- to C-terminus: Carbamoyl phosphate synthase small chain (378 aa).

A CPSase region spans residues 1 to 189 (MTKPAILALA…DSHPTIDAAD (189 aa)). 3 residues coordinate L-glutamine: Ser47, Gly241, and Gly243. The 186-residue stretch at 193–378 (HVVAFDYGVK…RFTDAMAKRR (186 aa)) folds into the Glutamine amidotransferase type-1 domain. Catalysis depends on Cys269, which acts as the Nucleophile. The L-glutamine site is built by Leu270, Gln273, Asn311, Gly313, and Phe314. Active-site residues include His353 and Glu355.

This sequence belongs to the CarA family. In terms of assembly, composed of two chains; the small (or glutamine) chain promotes the hydrolysis of glutamine to ammonia, which is used by the large (or ammonia) chain to synthesize carbamoyl phosphate. Tetramer of heterodimers (alpha,beta)4.

The catalysed reaction is hydrogencarbonate + L-glutamine + 2 ATP + H2O = carbamoyl phosphate + L-glutamate + 2 ADP + phosphate + 2 H(+). It catalyses the reaction L-glutamine + H2O = L-glutamate + NH4(+). It participates in amino-acid biosynthesis; L-arginine biosynthesis; carbamoyl phosphate from bicarbonate: step 1/1. Its pathway is pyrimidine metabolism; UMP biosynthesis via de novo pathway; (S)-dihydroorotate from bicarbonate: step 1/3. Its function is as follows. Small subunit of the glutamine-dependent carbamoyl phosphate synthetase (CPSase). CPSase catalyzes the formation of carbamoyl phosphate from the ammonia moiety of glutamine, carbonate, and phosphate donated by ATP, constituting the first step of 2 biosynthetic pathways, one leading to arginine and/or urea and the other to pyrimidine nucleotides. The small subunit (glutamine amidotransferase) binds and cleaves glutamine to supply the large subunit with the substrate ammonia. The sequence is that of Carbamoyl phosphate synthase small chain from Pseudomonas putida (strain ATCC 47054 / DSM 6125 / CFBP 8728 / NCIMB 11950 / KT2440).